A 475-amino-acid polypeptide reads, in one-letter code: Ankyrin repeat, SAM and basic leucine zipper domain-containing protein 1 (475 aa).

Residues 1–25 are disordered; the sequence is MAASALRGLPVAGGGESSESEDDGW. A phosphoserine mark is found at serine 17, serine 18, and serine 20. ANK repeat units lie at residues 45–74, 78–107, 110–144, 148–177, 181–210, and 214–243; these read EKKE…SVDS, YGWT…NASF, DKQS…DPNV, RLMT…EVNT, NGYT…NKML, and DGKM…PLEG. Residues 272–334 form the SAM domain; sequence SYTAFGDLEV…KILAALKELQ (63 aa).

As to quaternary structure, interacts with DDX4, PIWIL1, RANBP9 and TDRD1. Expressed exclusively in the testis and ovary and at higher levels in the adult testis compared with the adult ovary.

Its subcellular location is the cytoplasm. Its function is as follows. Plays a central role during spermatogenesis by repressing transposable elements and preventing their mobilization, which is essential for the germline integrity. Acts via the piRNA metabolic process, which mediates the repression of transposable elements during meiosis by forming complexes composed of piRNAs and Piwi proteins and governs the methylation and subsequent repression of transposons. Its association with pi-bodies suggests a participation in the primary piRNAs metabolic process. Required prior to the pachytene stage to facilitate the production of multiple types of piRNAs, including those associated with repeats involved in the regulation of retrotransposons. May act by mediating protein-protein interactions during germ cell maturation. This Homo sapiens (Human) protein is Ankyrin repeat, SAM and basic leucine zipper domain-containing protein 1.